The primary structure comprises 548 residues: Frizzled-7 (548 aa).

An N-terminal signal peptide occupies residues 1–19; sequence MFATVSLLFCLLLQPSPSA. Over 20 to 230 the chain is Extracellular; it reads QQYHGEKGIS…EEEVRFARLW (211 aa). Residues 31–150 enclose the FZ domain; it reads PDHGFCQPIS…HGAGEICVGQ (120 aa). 5 disulfides stabilise this stretch: Cys-36-Cys-97, Cys-44-Cys-90, Cys-81-Cys-118, Cys-107-Cys-147, and Cys-111-Cys-135. An N-linked (GlcNAc...) asparagine glycan is attached at Asn-50. Asn-151 carries N-linked (GlcNAc...) asparagine glycosylation. The chain crosses the membrane as a helical span at residues 231-251; that stretch reads VGIWAILCGISTLFTVLTYLV. The Cytoplasmic segment spans residues 252 to 262; that stretch reads DMRRFSYPERP. A helical transmembrane segment spans residues 263–283; sequence IIFLSGCYFMVAVAYTAGFLL. At 284–310 the chain is on the extracellular side; that stretch reads EERGVCVERFSEDSYRTVAQGTKKEGC. Residues 311–331 traverse the membrane as a helical segment; sequence TILFMILYFFGMASSIWWVIL. The Cytoplasmic segment spans residues 332-353; it reads SLTWFLAAGMKWGHEAIEANSQ. The chain crosses the membrane as a helical span at residues 354–374; sequence YFHLAAWAVPAVKTITILAMG. Topologically, residues 375–397 are extracellular; it reads QVDGDILSGVCYVGINSVDSLRG. Residues 398–418 form a helical membrane-spanning segment; sequence FVLAPLFVYLFIGTSFLLAGF. Residues 419 to 444 are Cytoplasmic-facing; sequence VSLFRIRTIMKHDGTKTEKLEKLMVR. Residues 445-465 traverse the membrane as a helical segment; sequence IGVFSVMYTVPATIVLACYFY. At 466-502 the chain is on the extracellular side; it reads EQAFRDTWEKTWLVQTCKGFAVPCPNYNFAPMSPDFT. A helical transmembrane segment spans residues 503-523; it reads VFMIKYLMTMIVGITSSFWIW. Over 524-548 the chain is Cytoplasmic; that stretch reads SGKTLQSWRRFYHRLSNGGKGETAV. A Lys-Thr-X-X-X-Trp motif, mediates interaction with the PDZ domain of Dvl family members motif is present at residues 526-531; sequence KTLQSW. The PDZ-binding motif lies at 546-548; sequence TAV.

It belongs to the G-protein coupled receptor Fz/Smo family. In terms of assembly, interacts with wnt11 and sdc4. The extracellular domain interacts with the extracellular domain of pcdh8/papc.

It localises to the cell membrane. The protein localises to the endosome membrane. Receptor for Wnt proteins. Acts in both canonical and non-canonical Wnt pathways. Although different papers report differing Wnt preferences, wnt5a, wnt8b and wnt11 have been proposed as synergists. In the canonical Wnt pathway, acts via beta-catenin to promote the expression of the dorsal genes siamois, twin and nodal3 and to establish the dorsal axis of the embryo and induce dorsal mesoderm formation. In a non-canonical Wnt/planar cell polarity (PCP) pathway, acts with sdc4 and dvl2/dsh to regulate convergent extension movements in gastrulation. Triggers phosphorylation of dvl2/dsh and its translocation to the plasma membrane. In a third branch of Wnt signaling, acts in a non-canonical pathway via trimeric G proteins, and independently of dvl2/dsh, to recruit protein kinase C (PKC) to the membrane and thus activate PKC. PKC signaling controls cell sorting and tissue separation during gastrulation. The sequence is that of Frizzled-7 from Xenopus tropicalis (Western clawed frog).